The following is a 633-amino-acid chain: MHGLLLAGLLALPMNVLAHPAEQHASNVLSRRGVDIESFRLPLKAKYMDSDAAAQKIQAMSFSKDDDYVSTATKLVKSTFPKSTFRVVDDHYIGTNGIGHVHFKQTAHGLDIDNSDFNVNIGRDGKVFSFGNSFFTGEIPKENPMVKRAFSDPVKALKGAVKALNLPVKSDNAKAKTTAGKESFEFMGTTGALSAPKANLVYLQKEDGTLALTWRVETDVGDNWLLTYVDAHNSETVHNVVDYVASAEFKVFAWGLNDPTEGNPTSIRDPWTDSSPYTWHSDGMTKYPTTRGNNAIAQDNPTGGSTYINNYRPQSPNLIFNYPWSPTATPPSSYKDFSITQLFYTTNRFHDLLYSFGFNEAAGNFQVNNGNKGGRGNDFAIVNAQDGSGTNNANFATPPDGSPGRMRMYNWTTARPNRDGCLEAGIVIHEYAHGLSNRLCGGPANSGCLNALESGGMGEGWGDFYATAIRLKPRDTKDTNYSMGAWAANNPKGIRAYLYSTNLQTNPYMYTSVNSLREVHQIGTVWATMLYDLMWALIEAHGGTYSANPVFRNGVPQDGRHLAMKLVMDGMALQPCNPNFVQARDAILDADRALTNSANKCTIWKAFAKRGLGYGAKYDARNRTGSNRLPPGC.

The N-terminal stretch at 1 to 18 is a signal peptide; the sequence is MHGLLLAGLLALPMNVLA. A propeptide spanning residues 19 to 246 is cleaved from the precursor; it reads HPAEQHASNV…VHNVVDYVAS (228 aa). Residue N410 is glycosylated (N-linked (GlcNAc...) asparagine). H429 is a binding site for Zn(2+). E430 is a catalytic residue. H433 serves as a coordination point for Zn(2+). Residues N480 and N622 are each glycosylated (N-linked (GlcNAc...) asparagine).

This sequence belongs to the peptidase M36 family. It depends on Zn(2+) as a cofactor.

Its subcellular location is the secreted. Its function is as follows. Secreted metalloproteinase probably acting as a virulence factor. The chain is Extracellular metalloproteinase 3 (MEP3) from Arthroderma benhamiae (Trichophyton mentagrophytes).